Consider the following 542-residue polypeptide: DNA-binding protein modulo (542 aa).

The interval Met1–Lys166 is disordered. Residues Ser42 and Ser44 each carry the phosphoserine modification. A compositionally biased stretch (acidic residues) spans Ser59–Pro114. Phosphoserine occurs at positions 120, 129, and 142. The span at Ala123–Ala135 shows a compositional bias: acidic residues. The span at Pro136–Gly158 shows a compositional bias: basic and acidic residues. RRM domains lie at Gln175–Asn251, Arg258–Gln331, Leu340–Ser429, and Arg420–Leu489. Ser304 is modified (phosphoserine). Position 330 is a phosphoserine; by PKA (Ser330). The residue at position 443 (Ser443) is a Phosphoserine. The interval Arg505 to Phe542 is disordered.

In terms of processing, the N-terminus is blocked.

It is found in the nucleus. Functionally, its capacity to bind DNA and protein(s), and its differential expression during development suggest a role in the regulation of gene expression during Drosophila development. It could, in interaction with other factors, be required for the translation of instructions provided by pattern forming genes and controls, via chromatin changes, the activity of genes critical for the process of morphogenesis of several embryonic territories. This chain is DNA-binding protein modulo (mod), found in Drosophila melanogaster (Fruit fly).